The sequence spans 687 residues: DNA-directed RNA polymerase subunit beta' (687 aa).

Positions 69, 71, 87, and 90 each coordinate Zn(2+). Positions 492, 494, and 496 each coordinate Mg(2+).

This sequence belongs to the RNA polymerase beta' chain family. RpoC1 subfamily. In plastids the minimal PEP RNA polymerase catalytic core is composed of four subunits: alpha, beta, beta', and beta''. When a (nuclear-encoded) sigma factor is associated with the core the holoenzyme is formed, which can initiate transcription. Mg(2+) is required as a cofactor. Requires Zn(2+) as cofactor.

Its subcellular location is the plastid. The protein resides in the chloroplast. It catalyses the reaction RNA(n) + a ribonucleoside 5'-triphosphate = RNA(n+1) + diphosphate. DNA-dependent RNA polymerase catalyzes the transcription of DNA into RNA using the four ribonucleoside triphosphates as substrates. The polypeptide is DNA-directed RNA polymerase subunit beta' (Silene latifolia (White campion)).